The following is a 610-amino-acid chain: Dopamine beta-hydroxylase (610 aa).

The Cytoplasmic segment spans residues 1–9; sequence MKVPSPSVR. A helical; Signal-anchor for type II membrane protein membrane pass occupies residues 10–30; that stretch reads EAASMYGTAVAIFLVILVAAL. The Intragranular segment spans residues 31–610; it reads QGSEPPESPF…TVVDIGGGKG (580 aa). The DOMON domain occupies 50-166; that stretch reads GTLELSWNVS…GTVHLVYGIL (117 aa). N-linked (GlcNAc...) asparagine glycosylation is found at Asn57, Asn177, and Asn194. 6 cysteine pairs are disulfide-bonded: Cys147/Cys589, Cys225/Cys276, Cys262/Cys288, Cys383/Cys496, Cys387/Cys558, and Cys459/Cys481. Residue Tyr223 is part of the active site. The Cu(2+) site is built by His255 and His256. Cu(2+) contacts are provided by His326, His405, His407, and Met480. His405 is a catalytic residue. Residues 586–610 are disordered; that stretch reads TPRCPASRGRSPAGPTVVDIGGGKG.

The protein belongs to the copper type II ascorbate-dependent monooxygenase family. As to quaternary structure, homotetramer; composed of two disulfide-linked dimers. Cu(2+) serves as cofactor. In terms of processing, proteolytic cleavage after the membrane-anchor leads to the release of the soluble form. N-glycosylated. Detected in adrenal medulla chromaffin cells.

Its subcellular location is the cytoplasmic vesicle. The protein localises to the secretory vesicle lumen. It is found in the secretory vesicle. It localises to the chromaffin granule lumen. The protein resides in the secreted. Its subcellular location is the secretory vesicle membrane. The protein localises to the chromaffin granule membrane. The enzyme catalyses dopamine + 2 L-ascorbate + O2 = (R)-noradrenaline + 2 monodehydro-L-ascorbate radical + H2O. It participates in catecholamine biosynthesis; (R)-noradrenaline biosynthesis; (R)-noradrenaline from dopamine: step 1/1. Functionally, catalyzes the hydroxylation of dopamine to noradrenaline (also known as norepinephrine), and is thus vital for regulation of these neurotransmitters. The protein is Dopamine beta-hydroxylase (DBH) of Equus caballus (Horse).